A 668-amino-acid chain; its full sequence is DNA ligase (668 aa).

Residues 32–36, 81–82, and glutamate 111 each bind NAD(+); these read DAEYD and SL. Lysine 113 serves as the catalytic N6-AMP-lysine intermediate. Arginine 134, glutamate 171, lysine 290, and lysine 314 together coordinate NAD(+). The Zn(2+) site is built by cysteine 408, cysteine 411, cysteine 426, and cysteine 432. The 78-residue stretch at 591–668 folds into the BRCT domain; the sequence is EEDLSLKGQT…DEEALIAILS (78 aa).

Belongs to the NAD-dependent DNA ligase family. LigA subfamily. Mg(2+) serves as cofactor. It depends on Mn(2+) as a cofactor.

The catalysed reaction is NAD(+) + (deoxyribonucleotide)n-3'-hydroxyl + 5'-phospho-(deoxyribonucleotide)m = (deoxyribonucleotide)n+m + AMP + beta-nicotinamide D-nucleotide.. Functionally, DNA ligase that catalyzes the formation of phosphodiester linkages between 5'-phosphoryl and 3'-hydroxyl groups in double-stranded DNA using NAD as a coenzyme and as the energy source for the reaction. It is essential for DNA replication and repair of damaged DNA. The chain is DNA ligase from Shewanella pealeana (strain ATCC 700345 / ANG-SQ1).